Here is a 100-residue protein sequence, read N- to C-terminus: Small ribosomal subunit protein uS14c (100 aa).

This sequence belongs to the universal ribosomal protein uS14 family. In terms of assembly, part of the 30S ribosomal subunit.

It is found in the plastid. The protein localises to the chloroplast. Binds 16S rRNA, required for the assembly of 30S particles. This Anthoceros angustus (Hornwort) protein is Small ribosomal subunit protein uS14c.